Here is a 257-residue protein sequence, read N- to C-terminus: Adenosylcobinamide-GDP ribazoletransferase (257 aa).

6 helical membrane-spanning segments follow: residues 4-24, 40-60, 64-84, 116-136, 140-160, and 193-213; these read AVRG…WWLG, VVGL…QWFF, FVVQ…LLHL, AAVA…AALL, AALA…ALLI, and LFVT…VVAV.

This sequence belongs to the CobS family. Requires Mg(2+) as cofactor.

The protein localises to the cell inner membrane. It catalyses the reaction alpha-ribazole + adenosylcob(III)inamide-GDP = adenosylcob(III)alamin + GMP + H(+). The catalysed reaction is alpha-ribazole 5'-phosphate + adenosylcob(III)inamide-GDP = adenosylcob(III)alamin 5'-phosphate + GMP + H(+). It participates in cofactor biosynthesis; adenosylcobalamin biosynthesis; adenosylcobalamin from cob(II)yrinate a,c-diamide: step 7/7. Joins adenosylcobinamide-GDP and alpha-ribazole to generate adenosylcobalamin (Ado-cobalamin). Also synthesizes adenosylcobalamin 5'-phosphate from adenosylcobinamide-GDP and alpha-ribazole 5'-phosphate. In Alkalilimnicola ehrlichii (strain ATCC BAA-1101 / DSM 17681 / MLHE-1), this protein is Adenosylcobinamide-GDP ribazoletransferase.